Here is a 104-residue protein sequence, read N- to C-terminus: Large ribosomal subunit protein bL21 (104 aa).

It belongs to the bacterial ribosomal protein bL21 family. Part of the 50S ribosomal subunit. Contacts protein L20.

Functionally, this protein binds to 23S rRNA in the presence of protein L20. The polypeptide is Large ribosomal subunit protein bL21 (Streptococcus pneumoniae serotype 2 (strain D39 / NCTC 7466)).